We begin with the raw amino-acid sequence, 465 residues long: Chromosomal replication initiator protein DnaA (465 aa).

The tract at residues 1-87 (MLWTDCLTRL…RPGSILSSSE (87 aa)) is domain I, interacts with DnaA modulators. Positions 81–123 (SILSSSEQPATTTAALQTAPIPQPAKVKREPEPVANTAVSSKS) are disordered. Low complexity predominate over residues 88 to 100 (QPATTTAALQTAP). Positions 88–127 (QPATTTAALQTAPIPQPAKVKREPEPVANTAVSSKSSKKK) are domain II. A domain III, AAA+ region region spans residues 128 to 345 (LLNPQFTFSL…GALNKVVAIS (218 aa)). Glycine 173, glycine 175, lysine 176, and threonine 177 together coordinate ATP. The segment at 346–465 (RFKGAPIDLD…YKNLLRLLQS (120 aa)) is domain IV, binds dsDNA.

The protein belongs to the DnaA family. Oligomerizes as a right-handed, spiral filament on DNA at oriC.

It is found in the cytoplasm. Its function is as follows. Plays an essential role in the initiation and regulation of chromosomal replication. ATP-DnaA binds to the origin of replication (oriC) to initiate formation of the DNA replication initiation complex once per cell cycle. Binds the DnaA box (a 9 base pair repeat at the origin) and separates the double-stranded (ds)DNA. Forms a right-handed helical filament on oriC DNA; dsDNA binds to the exterior of the filament while single-stranded (ss)DNA is stabiized in the filament's interior. The ATP-DnaA-oriC complex binds and stabilizes one strand of the AT-rich DNA unwinding element (DUE), permitting loading of DNA polymerase. After initiation quickly degrades to an ADP-DnaA complex that is not apt for DNA replication. Binds acidic phospholipids. This chain is Chromosomal replication initiator protein DnaA, found in Acinetobacter baumannii (strain AB307-0294).